A 118-amino-acid polypeptide reads, in one-letter code: Sporulation protein YjcA (118 aa).

A run of 3 helical transmembrane segments spans residues 8-28, 62-82, and 92-112; these read IVLLSLAVFRLARLLVFDTIM, FIGELLSCYWCTGVWCAGFLI, and AQWLILLLAIAGLAGIIETLV.

This sequence belongs to the UPF0713 family.

Its subcellular location is the cell membrane. In terms of biological role, involved in sporulation. The sequence is that of Sporulation protein YjcA (yjcA) from Bacillus subtilis (strain 168).